A 77-amino-acid chain; its full sequence is Small ribosomal subunit protein bS18 (77 aa).

The protein belongs to the bacterial ribosomal protein bS18 family. As to quaternary structure, part of the 30S ribosomal subunit. Forms a tight heterodimer with protein bS6.

Functionally, binds as a heterodimer with protein bS6 to the central domain of the 16S rRNA, where it helps stabilize the platform of the 30S subunit. In Bacillus cytotoxicus (strain DSM 22905 / CIP 110041 / 391-98 / NVH 391-98), this protein is Small ribosomal subunit protein bS18.